The following is a 151-amino-acid chain: Deoxyuridine 5'-triphosphate nucleotidohydrolase (151 aa).

Substrate is bound by residues Arg-70 to Gly-72, Asn-83, Leu-87 to Asp-89, and Met-97.

The protein belongs to the dUTPase family. Mg(2+) serves as cofactor.

It carries out the reaction dUTP + H2O = dUMP + diphosphate + H(+). Its pathway is pyrimidine metabolism; dUMP biosynthesis; dUMP from dCTP (dUTP route): step 2/2. Functionally, this enzyme is involved in nucleotide metabolism: it produces dUMP, the immediate precursor of thymidine nucleotides and it decreases the intracellular concentration of dUTP so that uracil cannot be incorporated into DNA. The sequence is that of Deoxyuridine 5'-triphosphate nucleotidohydrolase from Histophilus somni (strain 129Pt) (Haemophilus somnus).